We begin with the raw amino-acid sequence, 557 residues long: Probable protein kinase UbiB (557 aa).

Residues 121–509 (AFDTTPLASA…RKLQTRVVTA (389 aa)) form the Protein kinase domain. ATP-binding positions include 127 to 135 (LASASIAQV) and lysine 154. Catalysis depends on aspartate 289, which acts as the Proton acceptor. The next 2 membrane-spanning stretches (helical) occupy residues 506 to 526 (VVTA…YGLH) and 535 to 555 (VPVW…IAWL).

Belongs to the ABC1 family. UbiB subfamily.

It localises to the cell inner membrane. It functions in the pathway cofactor biosynthesis; ubiquinone biosynthesis [regulation]. Functionally, is probably a protein kinase regulator of UbiI activity which is involved in aerobic coenzyme Q (ubiquinone) biosynthesis. The chain is Probable protein kinase UbiB from Xanthomonas campestris pv. campestris (strain 8004).